Reading from the N-terminus, the 337-residue chain is 1,4-dihydroxy-2-naphthoyl-CoA synthase, peroxisomal (337 aa).

Residues 97–98 (RR), lysine 133, 137–141 (SGGDQ), 181–185 (YAVGG), threonine 207, and serine 213 contribute to the substrate site. 206 to 208 (QTG) is a hydrogencarbonate binding site.

This sequence belongs to the enoyl-CoA hydratase/isomerase family. MenB subfamily. In terms of assembly, homohexamer. The cofactor is hydrogencarbonate.

It localises to the peroxisome. The enzyme catalyses 2-succinylbenzoyl-CoA + H(+) = 1,4-dihydroxy-2-naphthoyl-CoA + H2O. Involved in the biosynthesis of phylloquinone (vitamin K1). Converts o-succinylbenzoyl-CoA (OSB-CoA) to 1,4-dihydroxy-2-naphthoyl-CoA (DHNA-CoA). This Arabidopsis thaliana (Mouse-ear cress) protein is 1,4-dihydroxy-2-naphthoyl-CoA synthase, peroxisomal (MENB).